The sequence spans 287 residues: ATP synthase gamma chain (287 aa).

The protein belongs to the ATPase gamma chain family. As to quaternary structure, F-type ATPases have 2 components, CF(1) - the catalytic core - and CF(0) - the membrane proton channel. CF(1) has five subunits: alpha(3), beta(3), gamma(1), delta(1), epsilon(1). CF(0) has three main subunits: a, b and c.

The protein localises to the cell inner membrane. In terms of biological role, produces ATP from ADP in the presence of a proton gradient across the membrane. The gamma chain is believed to be important in regulating ATPase activity and the flow of protons through the CF(0) complex. This chain is ATP synthase gamma chain, found in Geotalea uraniireducens (strain Rf4) (Geobacter uraniireducens).